Reading from the N-terminus, the 157-residue chain is uncharacterized protein (157 aa).

Residues 33–134 (NLKHFLDVAR…MYRADKLSRL (102 aa)) enclose the HD domain.

This is an uncharacterized protein from Clostridium beijerinckii (strain ATCC 51743 / NCIMB 8052) (Clostridium acetobutylicum).